Here is a 223-residue protein sequence, read N- to C-terminus: Small ribosomal subunit protein uS11m (223 aa).

Residues 1–38 (MVLKHSVTYNLSFFISFTFSSIFFSSLILFLVYKSVLS) constitute a mitochondrion transit peptide.

It belongs to the universal ribosomal protein uS11 family. As to quaternary structure, component of the mitochondrial small ribosomal subunit (mt-SSU). Mature yeast 74S mitochondrial ribosomes consist of a small (37S) and a large (54S) subunit. The 37S small subunit contains a 15S ribosomal RNA (15S mt-rRNA) and at least 32 different proteins. The 54S large subunit contains a 21S rRNA (21S mt-rRNA) and at least 45 different proteins.

The protein localises to the mitochondrion. Functionally, component of the mitochondrial ribosome (mitoribosome), a dedicated translation machinery responsible for the synthesis of mitochondrial genome-encoded proteins, including at least some of the essential transmembrane subunits of the mitochondrial respiratory chain. The mitoribosomes are attached to the mitochondrial inner membrane and translation products are cotranslationally integrated into the membrane. This chain is Small ribosomal subunit protein uS11m (mrps18), found in Schizosaccharomyces pombe (strain 972 / ATCC 24843) (Fission yeast).